The sequence spans 317 residues: Pectinesterase 31 (317 aa).

Residues threonine 91 and glutamine 121 each coordinate substrate. Aspartate 144 functions as the Proton donor in the catalytic mechanism. Aspartate 165 (nucleophile) is an active-site residue. Arginine 222 and tryptophan 224 together coordinate substrate.

The protein belongs to the pectinesterase family. Expressed in siliques.

It carries out the reaction [(1-&gt;4)-alpha-D-galacturonosyl methyl ester](n) + n H2O = [(1-&gt;4)-alpha-D-galacturonosyl](n) + n methanol + n H(+). It participates in glycan metabolism; pectin degradation; 2-dehydro-3-deoxy-D-gluconate from pectin: step 1/5. Does not require salt for activity. Not inhibited by kiwi pectin methylesterase inhibitor (PMEI). Acts in the modification of cell walls via demethylesterification of cell wall pectin. Acts in a blockwise manner, resulting in a cell wall rigidification. The protein is Pectinesterase 31 (PME31) of Arabidopsis thaliana (Mouse-ear cress).